The following is a 721-amino-acid chain: Catalase-peroxidase 1 (721 aa).

The segment at residues 98-226 (WHAAGTYRIA…LAAVMMGLIY (129 aa)) is a cross-link (tryptophyl-tyrosyl-methioninium (Trp-Tyr) (with M-252)). Residue histidine 99 is the Proton acceptor of the active site. Positions 226–252 (YVNPEGVDGQPDPLKTAHDVRVTFARM) form a cross-link, tryptophyl-tyrosyl-methioninium (Tyr-Met) (with W-98). Histidine 267 is a binding site for heme b.

This sequence belongs to the peroxidase family. Peroxidase/catalase subfamily. In terms of assembly, homodimer or homotetramer. The cofactor is heme b. Post-translationally, formation of the three residue Trp-Tyr-Met cross-link is important for the catalase, but not the peroxidase activity of the enzyme.

The catalysed reaction is H2O2 + AH2 = A + 2 H2O. It carries out the reaction 2 H2O2 = O2 + 2 H2O. Functionally, bifunctional enzyme with both catalase and broad-spectrum peroxidase activity. In Vibrio parahaemolyticus serotype O3:K6 (strain RIMD 2210633), this protein is Catalase-peroxidase 1.